Here is a 188-residue protein sequence, read N- to C-terminus: tRNA(Phe) 7-((3-amino-3-carboxypropyl)-4-demethylwyosine(37)-N(4))-methyltransferase (188 aa).

The protein belongs to the TYW3 family.

It catalyses the reaction 4-demethyl-7-[(3S)-3-amino-3-carboxypropyl]wyosine(37) in tRNA(Phe) + S-adenosyl-L-methionine = 7-[(3S)-3-amino-3-carboxypropyl]wyosine(37) in tRNA(Phe) + S-adenosyl-L-homocysteine + H(+). In terms of biological role, S-adenosyl-L-methionine-dependent methyltransferase that acts as a component of the wyosine derivatives biosynthesis pathway. Probably methylates N-4 position of wybutosine-86 to produce wybutosine-72. The sequence is that of tRNA(Phe) 7-((3-amino-3-carboxypropyl)-4-demethylwyosine(37)-N(4))-methyltransferase from Aeropyrum pernix (strain ATCC 700893 / DSM 11879 / JCM 9820 / NBRC 100138 / K1).